The primary structure comprises 414 residues: Probable uracil permease (414 aa).

At 1–14 (MTNQIPPSLAENQS) the chain is on the cytoplasmic side. Residues 15–38 (KLKQSFVGLQMLFVAFGALVLVPL) form a helical membrane-spanning segment. The Periplasmic segment spans residues 39 to 42 (ITGL). The chain crosses the membrane as a helical span at residues 43–62 (DSNTALLTAGVGTLLFQFCT). Topologically, residues 63–65 (GKQ) are cytoplasmic. A discontinuously helical membrane pass occupies residues 66 to 82 (VPIFLASSFAFIAPIQY). Uracil is bound at residue Phe74. Over 83–91 (GVQTWGIAT) the chain is Periplasmic. The helical transmembrane segment at 92-112 (TMGGLAFTGLVYFALSTLVKL) threads the bilayer. The Cytoplasmic portion of the chain corresponds to 113 to 124 (RGAEALQRFFPP). A helical transmembrane segment spans residues 125–146 (VVVGPVIIIIGMGLAPIAVDMS). Residues 147-155 (LGKNSAYAY) are Periplasmic-facing. The chain crosses the membrane as a helical span at residues 156–171 (NDAVLVSMVTLLTTLS). Topologically, residues 172–178 (VAVFAKG) are cytoplasmic. Residues 179-199 (LMKLIPIMFGITAGYILCLFL) traverse the membrane as a helical segment. Residues 200-224 (GLINFQPVIDAPWFSLPKLTTPEFN) lie on the Periplasmic side of the membrane. A helical membrane pass occupies residues 225 to 248 (LEAILYMLPIAIAPAVEHVGGIMA). Glu241 contacts uracil. At 249–261 (ISSVTGKDFLKKP) the chain is on the cytoplasmic side. A helical membrane pass occupies residues 262–281 (GLHRTLLGDGIATAAASLVG). A discontinuously helical transmembrane segment spans residues 282–298 (GPPNTTYAEVTGAVMLT). Position 290 (Glu290) interacts with uracil. At 299–301 (RNF) the chain is on the cytoplasmic side. Residues 302-319 (NPNIMTWAAVWAIAISFC) traverse the membrane as a helical segment. Over 320 to 332 (GKVGAFLSTIPTI) the chain is Periplasmic. A helical membrane pass occupies residues 333-354 (VMGGIMMLVFGSIAVVGMSTLI). Residues 355–365 (RGKVDVTEARN) lie on the Cytoplasmic side of the membrane. The segment at residues 366 to 401 (LCIISVVMTFGIGNMFVDVGNVSLKGISLCAIVAII) is an intramembrane region (discontinuously helical). The Cytoplasmic segment spans residues 402–414 (LNLVLPKAKNEVE).

It belongs to the nucleobase:cation symporter-2 (NCS2) (TC 2.A.40) family.

Its subcellular location is the cell inner membrane. It carries out the reaction uracil(in) + H(+)(in) = uracil(out) + H(+)(out). Its function is as follows. Transport of uracil in the cell. The chain is Probable uracil permease (uraA) from Haemophilus influenzae (strain ATCC 51907 / DSM 11121 / KW20 / Rd).